The primary structure comprises 339 residues: Isopentenyl-diphosphate delta-isomerase (339 aa).

Residue 7–8 (RK) coordinates substrate. FMN is bound by residues serine 65, 66 to 68 (SMT), serine 96, and asparagine 125. 96-98 (SQR) contacts substrate. Glutamine 160 lines the substrate pocket. Glutamate 161 is a Mg(2+) binding site. Residues lysine 192, threonine 222, and 293–294 (AG) contribute to the FMN site.

It belongs to the IPP isomerase type 2 family. Homooctamer. Dimer of tetramers. Requires FMN as cofactor. NADPH serves as cofactor. The cofactor is Mg(2+).

It is found in the cytoplasm. The catalysed reaction is isopentenyl diphosphate = dimethylallyl diphosphate. Functionally, involved in the biosynthesis of isoprenoids. Catalyzes the 1,3-allylic rearrangement of the homoallylic substrate isopentenyl (IPP) to its allylic isomer, dimethylallyl diphosphate (DMAPP). The chain is Isopentenyl-diphosphate delta-isomerase from Vibrio campbellii (strain ATCC BAA-1116).